Reading from the N-terminus, the 257-residue chain is Pimeloyl-[acyl-carrier protein] methyl ester esterase (257 aa).

One can recognise an AB hydrolase-1 domain in the interval 15–241 (HLVLLHGWGL…KAAHAPFVSH (227 aa)). Residues tryptophan 22, 82–83 (SL), and 143–147 (FLALQ) each bind substrate. The Nucleophile role is filled by serine 82. Catalysis depends on residues aspartate 207 and histidine 235. A substrate-binding site is contributed by histidine 235.

Belongs to the AB hydrolase superfamily. Carboxylesterase BioH family. In terms of assembly, monomer.

Its subcellular location is the cytoplasm. The enzyme catalyses 6-carboxyhexanoyl-[ACP] methyl ester + H2O = 6-carboxyhexanoyl-[ACP] + methanol + H(+). Its pathway is cofactor biosynthesis; biotin biosynthesis. The physiological role of BioH is to remove the methyl group introduced by BioC when the pimeloyl moiety is complete. It allows to synthesize pimeloyl-ACP via the fatty acid synthetic pathway through the hydrolysis of the ester bonds of pimeloyl-ACP esters. This chain is Pimeloyl-[acyl-carrier protein] methyl ester esterase, found in Klebsiella pneumoniae (strain 342).